A 438-amino-acid chain; its full sequence is Enolase 1 (438 aa).

2 residues coordinate substrate: His160 and Glu169. Glu212 serves as the catalytic Proton donor. Mg(2+) contacts are provided by Asp247, Glu296, and Asp321. Substrate-binding residues include Glu296 and Asp321. Lys346 acts as the Proton acceptor in catalysis. Residues 373-376 (SHRS) and Lys397 each bind substrate.

Belongs to the enolase family. In terms of assembly, homodimer. Mg(2+) serves as cofactor.

It is found in the cytoplasm. It carries out the reaction (2R)-2-phosphoglycerate = phosphoenolpyruvate + H2O. It functions in the pathway carbohydrate degradation; glycolysis; pyruvate from D-glyceraldehyde 3-phosphate: step 4/5. This is Enolase 1 (ENO1) from Candida glabrata (strain ATCC 2001 / BCRC 20586 / JCM 3761 / NBRC 0622 / NRRL Y-65 / CBS 138) (Yeast).